A 257-amino-acid chain; its full sequence is Acyl-[acyl-carrier-protein]--UDP-N-acetylglucosamine O-acyltransferase (257 aa).

The protein belongs to the transferase hexapeptide repeat family. LpxA subfamily. In terms of assembly, homotrimer.

It is found in the cytoplasm. The enzyme catalyses a (3R)-hydroxyacyl-[ACP] + UDP-N-acetyl-alpha-D-glucosamine = a UDP-3-O-[(3R)-3-hydroxyacyl]-N-acetyl-alpha-D-glucosamine + holo-[ACP]. It functions in the pathway glycolipid biosynthesis; lipid IV(A) biosynthesis; lipid IV(A) from (3R)-3-hydroxytetradecanoyl-[acyl-carrier-protein] and UDP-N-acetyl-alpha-D-glucosamine: step 1/6. Functionally, involved in the biosynthesis of lipid A, a phosphorylated glycolipid that anchors the lipopolysaccharide to the outer membrane of the cell. The chain is Acyl-[acyl-carrier-protein]--UDP-N-acetylglucosamine O-acyltransferase from Anaeromyxobacter dehalogenans (strain 2CP-1 / ATCC BAA-258).